The chain runs to 631 residues: MAIFFLPLVLPGFAPRSEDSFKSPARFSWSYLNPSKLKKRSVGLSTETNAHGQAYFTLEGHKFMIVGGSIHYFRVPREYWKDRLLKLQACGFNTVTTYIPWNLHEQERGKFDFSEILDLEAYVLLAKTLGLWVILRPGPYICAEVDLGGLPSWLLRNPGSNLRTTNKDFIEAVDKYFDHLIPKILPLQYRRGGPVIAVQVENEYGSFRNDKNYMEYIKKALLNRGIVELLLTSDNESGIRIGSVKGALATINVNSFIKDSFVKLHRMQNDKPIMIMEYWTGWYDSWGSKHTEKSANEIRRTIYRFFSYGLSFNVYMFHGGTNFGFINGGYHENGHTNVVTSYDYDAVLSEAGDYTEKYFKLRKLFASGSARPLPPLPRLIPKAVYPSVNLSFYLPLFDILPYLNKPVMLETPVTMENLPINNGSGQPFGLVLYETSICFGGGLSASVHDSAQVFLNDKSIGILDENNEFLHIPKIQGCQLLRILVENQGRINFSWRIQSEQKGLNEAVTINGTLLRNFTIYSLDMKMSFFERLRSASWRIAPKTYKGPAFYWGSLNVGSFPTDTFLHLPNWHYGFVFINGRNLGRYWDIGPQKTLYLPGPWLHPEDNDVIVFEKIEKGFYIQTRKKPQLQN.

Glutamate 203 acts as the Proton donor in catalysis. Glutamate 277 (nucleophile) is an active-site residue.

Belongs to the glycosyl hydrolase 35 family.

The polypeptide is Beta-galactosidase-1-like protein 3 (Glb1l3) (Rattus norvegicus (Rat)).